Reading from the N-terminus, the 248-residue chain is tRNA uridine(34) hydroxylase (248 aa).

Positions 128–222 (EGRPVVMLDT…YFEEVGGAHY (95 aa)) constitute a Rhodanese domain. Cysteine 182 functions as the Cysteine persulfide intermediate in the catalytic mechanism.

Belongs to the TrhO family.

The enzyme catalyses uridine(34) in tRNA + AH2 + O2 = 5-hydroxyuridine(34) in tRNA + A + H2O. Functionally, catalyzes oxygen-dependent 5-hydroxyuridine (ho5U) modification at position 34 in tRNAs. In Thiobacillus denitrificans (strain ATCC 25259 / T1), this protein is tRNA uridine(34) hydroxylase.